We begin with the raw amino-acid sequence, 432 residues long: Adenylosuccinate synthetase (432 aa).

GTP contacts are provided by residues 12–18 (GDEGKGK) and 40–42 (GHT). Asp13 functions as the Proton acceptor in the catalytic mechanism. Residues Asp13 and Gly40 each coordinate Mg(2+). IMP-binding positions include 13-16 (DEGK), 38-41 (NAGH), Thr128, Arg142, Gln223, Thr238, and Arg302. Catalysis depends on His41, which acts as the Proton donor. 298–304 (TTTGRPR) provides a ligand contact to substrate. GTP is bound by residues Arg304, 330 to 332 (HLD), and 417 to 419 (GVG).

Belongs to the adenylosuccinate synthetase family. In terms of assembly, homodimer. Mg(2+) serves as cofactor.

The protein localises to the cytoplasm. It catalyses the reaction IMP + L-aspartate + GTP = N(6)-(1,2-dicarboxyethyl)-AMP + GDP + phosphate + 2 H(+). The protein operates within purine metabolism; AMP biosynthesis via de novo pathway; AMP from IMP: step 1/2. Plays an important role in the de novo pathway of purine nucleotide biosynthesis. Catalyzes the first committed step in the biosynthesis of AMP from IMP. This chain is Adenylosuccinate synthetase, found in Symbiobacterium thermophilum (strain DSM 24528 / JCM 14929 / IAM 14863 / T).